Consider the following 287-residue polypeptide: Phosphatidylserine decarboxylase proenzyme (287 aa).

Catalysis depends on charge relay system; for autoendoproteolytic cleavage activity residues Asp-90, His-147, and Ser-252. The active-site Schiff-base intermediate with substrate; via pyruvic acid; for decarboxylase activity is Ser-252. Ser-252 is modified (pyruvic acid (Ser); by autocatalysis).

It belongs to the phosphatidylserine decarboxylase family. PSD-B subfamily. Prokaryotic type I sub-subfamily. As to quaternary structure, heterodimer of a large membrane-associated beta subunit and a small pyruvoyl-containing alpha subunit. The cofactor is pyruvate. Post-translationally, is synthesized initially as an inactive proenzyme. Formation of the active enzyme involves a self-maturation process in which the active site pyruvoyl group is generated from an internal serine residue via an autocatalytic post-translational modification. Two non-identical subunits are generated from the proenzyme in this reaction, and the pyruvate is formed at the N-terminus of the alpha chain, which is derived from the carboxyl end of the proenzyme. The autoendoproteolytic cleavage occurs by a canonical serine protease mechanism, in which the side chain hydroxyl group of the serine supplies its oxygen atom to form the C-terminus of the beta chain, while the remainder of the serine residue undergoes an oxidative deamination to produce ammonia and the pyruvoyl prosthetic group on the alpha chain. During this reaction, the Ser that is part of the protease active site of the proenzyme becomes the pyruvoyl prosthetic group, which constitutes an essential element of the active site of the mature decarboxylase.

The protein resides in the cell membrane. It catalyses the reaction a 1,2-diacyl-sn-glycero-3-phospho-L-serine + H(+) = a 1,2-diacyl-sn-glycero-3-phosphoethanolamine + CO2. It functions in the pathway phospholipid metabolism; phosphatidylethanolamine biosynthesis; phosphatidylethanolamine from CDP-diacylglycerol: step 2/2. Functionally, catalyzes the formation of phosphatidylethanolamine (PtdEtn) from phosphatidylserine (PtdSer). The chain is Phosphatidylserine decarboxylase proenzyme from Pseudomonas putida (strain ATCC 47054 / DSM 6125 / CFBP 8728 / NCIMB 11950 / KT2440).